A 401-amino-acid polypeptide reads, in one-letter code: Riboflavin biosynthesis protein RibBA (401 aa).

The tract at residues 1 to 203 (MTDFQFSKVE…IQQLQEYRRK (203 aa)) is DHBP synthase. Residues 30–31 (RE), Asp-35, 142–146 (RNGHT), and Glu-166 contribute to the D-ribulose 5-phosphate site. Residue Glu-31 participates in Mg(2+) binding. His-145 contacts Mg(2+). The GTP cyclohydrolase II stretch occupies residues 204-401 (HDSLVKQISV…QIKMGHMFNF (198 aa)). 254-258 (RIHSE) provides a ligand contact to GTP. Positions 259, 270, and 272 each coordinate Zn(2+). GTP contacts are provided by residues Gln-275, 297 to 299 (EGR), and Thr-319. Asp-331 (proton acceptor; for GTP cyclohydrolase activity) is an active-site residue. The active-site Nucleophile; for GTP cyclohydrolase activity is Arg-333. Residues Thr-354 and Lys-359 each contribute to the GTP site.

It in the N-terminal section; belongs to the DHBP synthase family. In the C-terminal section; belongs to the GTP cyclohydrolase II family. Requires Mg(2+) as cofactor. It depends on Mn(2+) as a cofactor. The cofactor is Zn(2+).

It catalyses the reaction D-ribulose 5-phosphate = (2S)-2-hydroxy-3-oxobutyl phosphate + formate + H(+). The enzyme catalyses GTP + 4 H2O = 2,5-diamino-6-hydroxy-4-(5-phosphoribosylamino)-pyrimidine + formate + 2 phosphate + 3 H(+). It functions in the pathway cofactor biosynthesis; riboflavin biosynthesis; 2-hydroxy-3-oxobutyl phosphate from D-ribulose 5-phosphate: step 1/1. The protein operates within cofactor biosynthesis; riboflavin biosynthesis; 5-amino-6-(D-ribitylamino)uracil from GTP: step 1/4. Its function is as follows. Catalyzes the conversion of D-ribulose 5-phosphate to formate and 3,4-dihydroxy-2-butanone 4-phosphate. Functionally, catalyzes the conversion of GTP to 2,5-diamino-6-ribosylamino-4(3H)-pyrimidinone 5'-phosphate (DARP), formate and pyrophosphate. This is Riboflavin biosynthesis protein RibBA from Actinobacillus pleuropneumoniae serotype 3 (strain JL03).